The sequence spans 98 residues: Large ribosomal subunit protein uL23 (98 aa).

This sequence belongs to the universal ribosomal protein uL23 family. Part of the 50S ribosomal subunit. Contacts protein L29, and trigger factor when it is bound to the ribosome.

In terms of biological role, one of the early assembly proteins it binds 23S rRNA. One of the proteins that surrounds the polypeptide exit tunnel on the outside of the ribosome. Forms the main docking site for trigger factor binding to the ribosome. The chain is Large ribosomal subunit protein uL23 from Legionella pneumophila (strain Paris).